A 180-amino-acid chain; its full sequence is ATP-dependent protease subunit HslV (180 aa).

Residue T9 is part of the active site. Na(+) contacts are provided by A164, C167, and T170.

This sequence belongs to the peptidase T1B family. HslV subfamily. As to quaternary structure, a double ring-shaped homohexamer of HslV is capped on each side by a ring-shaped HslU homohexamer. The assembly of the HslU/HslV complex is dependent on binding of ATP.

Its subcellular location is the cytoplasm. It catalyses the reaction ATP-dependent cleavage of peptide bonds with broad specificity.. Allosterically activated by HslU binding. Its function is as follows. Protease subunit of a proteasome-like degradation complex believed to be a general protein degrading machinery. This Leptospira interrogans serogroup Icterohaemorrhagiae serovar Lai (strain 56601) protein is ATP-dependent protease subunit HslV.